The chain runs to 381 residues: Cytochrome b (381 aa).

4 helical membrane-spanning segments follow: residues 32 to 52 (GGSLAGMMLASQMLTGILLAM), 76 to 98 (MILRYAHANGASLFFIVVYLHVL), 113 to 133 (VWISGVVILLVMIITAFIGYV), and 179 to 199 (FYSFHYTLPFILAGLSVFHIA). Residues His82 and His96 each contribute to the heme b site. 2 residues coordinate heme b: His183 and His197. His202 serves as a coordination point for a ubiquinone. A run of 4 helical transmembrane segments spans residues 225 to 245 (FGAKDLVGALFLALVFSILVF), 289 to 309 (AMGVLAIGLVFASLFAMPFIG), 318 to 338 (ITEWLYWTFLADVLLLTWLGG), and 345 to 365 (TSFVGQCCTAYLFFYLLVCQP).

Belongs to the cytochrome b family. As to quaternary structure, the main subunits of complex b-c1 are: cytochrome b, cytochrome c1 and the Rieske protein. The cofactor is heme b.

It localises to the mitochondrion inner membrane. Component of the ubiquinol-cytochrome c reductase complex (complex III or cytochrome b-c1 complex) that is part of the mitochondrial respiratory chain. The b-c1 complex mediates electron transfer from ubiquinol to cytochrome c. Contributes to the generation of a proton gradient across the mitochondrial membrane that is then used for ATP synthesis. In Chlamydomonas reinhardtii (Chlamydomonas smithii), this protein is Cytochrome b (MT-CYB).